Here is a 372-residue protein sequence, read N- to C-terminus: Peptide chain release factor 2 (372 aa).

Position 253 is an N5-methylglutamine (Gln-253).

The protein belongs to the prokaryotic/mitochondrial release factor family. Methylated by PrmC. Methylation increases the termination efficiency of RF2.

The protein resides in the cytoplasm. In terms of biological role, peptide chain release factor 2 directs the termination of translation in response to the peptide chain termination codons UGA and UAA. In Nocardia farcinica (strain IFM 10152), this protein is Peptide chain release factor 2.